Consider the following 192-residue polypeptide: Glutaredoxin-C9 (192 aa).

Residues 89-191 enclose the Glutaredoxin domain; sequence YERVARMASG…PLLKQAGALW (103 aa). An intrachain disulfide couples Cys-109 to Cys-112. A Responsive for interaction with TGA factors motif is present at residues 189–192; that stretch reads ALWL.

Belongs to the glutaredoxin family. CC-type subfamily.

The protein resides in the cytoplasm. Its subcellular location is the nucleus. In terms of biological role, has a glutathione-disulfide oxidoreductase activity in the presence of NADPH and glutathione reductase. Reduces low molecular weight disulfides and proteins. The protein is Glutaredoxin-C9 (GRXC9) of Oryza sativa subsp. japonica (Rice).